The chain runs to 665 residues: MSTNKSSIEKITLGSFLIALGVVYGDIGTSPLYVMKSIINGNGGLESITPDFILGVLSLIFWTMTLLTTIKYVLITLKADNKGEGGIFSLYTLVRRRAKWLIIPAMVGGSALLADGMLTPAVTVTSSIEGLKILPSFNDIFGNNQDIIIIIVLVILSFLFFIQHFGTEIIGKIFGPVMFIWFAFLAILGIVNLSGNLYLLKALSPHYAIKILFSPNNHLGFFILGGVFLSTTGAEALYSDLGHVGRKNIYLTWPLVKICLLLNYFGQAAWILSQKNNTKLYGIESLNPFFQMMPSWLLLFGVLISTLAAIIASQALISGSYTLVSEAIKLNLFPRLQCLYPSNSKGQIYMPAINRILWIACIAIVLYFRSSDNMEAAYGLSITVTMLMTSILLFNYLLKIKTPLPIALIILVFFGSLEFSFLISSAVKFEKGGFVSVLIALCILSIMYIWIKGHYIKMSLLDYIPIENYKNQLKELKNDVDRPKYATNLVYLTSSEKSKRIERKIMYSILDKRPKRADVYWFVNVIVTDEPYTAEYTVNTFGTDYMVKVQLKLGFRVNQKLNVFLRQIVCELINNGDIKVQNRKYTTLPNRNVGDFRFILINECLSSESKLKSWNSMIIKAKLFIKKFTVSPAKWFGLESSEIEIENVPLILGSTEHTTLKRVYK.

12 helical membrane passes run 15–35, 48–68, 100–120, 147–167, 173–193, 219–239, 251–271, 292–312, 348–368, 378–398, 403–423, and 431–451; these read SFLI…LYVM, ITPD…TLLT, WLII…MLTP, IIII…HFGT, IFGP…IVNL, LGFF…ALYS, LTWP…AAWI, MMPS…AIIA, IYMP…VLYF, YGLS…NYLL, PLPI…SFLI, and KGGF…YIWI.

It belongs to the HAK/KUP transporter (TC 2.A.72) family.

Its subcellular location is the cell membrane. The catalysed reaction is K(+)(in) + H(+)(in) = K(+)(out) + H(+)(out). Functionally, transport of potassium into the cell. Likely operates as a K(+):H(+) symporter. The chain is Probable potassium transport system protein Kup from Clostridium perfringens (strain ATCC 13124 / DSM 756 / JCM 1290 / NCIMB 6125 / NCTC 8237 / Type A).